An 879-amino-acid polypeptide reads, in one-letter code: uncharacterized protein (879 aa).

Residues 14-34 (LAFFGCGVSVGAFFTLFLMGT) form a helical membrane-spanning segment.

Its subcellular location is the membrane. This is an uncharacterized protein from Mycoplasma pneumoniae (strain ATCC 29342 / M129 / Subtype 1) (Mycoplasmoides pneumoniae).